A 198-amino-acid polypeptide reads, in one-letter code: Segregation and condensation protein B (198 aa).

The tract at residues 167-198 is disordered; the sequence is PKLADPEADDPDQNEMDLFFDRFNQSKEQEEE. Over residues 172–181 the composition is skewed to acidic residues; it reads PEADDPDQNE.

The protein belongs to the ScpB family. In terms of assembly, homodimer. Homodimerization may be required to stabilize the binding of ScpA to the Smc head domains. Component of a cohesin-like complex composed of ScpA, ScpB and the Smc homodimer, in which ScpA and ScpB bind to the head domain of Smc. The presence of the three proteins is required for the association of the complex with DNA.

The protein localises to the cytoplasm. Participates in chromosomal partition during cell division. May act via the formation of a condensin-like complex containing Smc and ScpA that pull DNA away from mid-cell into both cell halves. The sequence is that of Segregation and condensation protein B from Listeria welshimeri serovar 6b (strain ATCC 35897 / DSM 20650 / CCUG 15529 / CIP 8149 / NCTC 11857 / SLCC 5334 / V8).